The primary structure comprises 287 residues: Cysteine-rich repeat secretory protein 58 (287 aa).

The first 20 residues, 1–20 (METTKKLFALLCLFVTMNQA), serve as a signal peptide directing secretion. At 21 to 267 (ISVSDPDDME…GSFSHRGNNK (247 aa)) the chain is on the extracellular side. Gnk2-homologous domains follow at residues 28-130 (DMET…DKFF) and 135-246 (ETNP…TYNS). 9 N-linked (GlcNAc...) asparagine glycosylation sites follow: asparagine 39, asparagine 43, asparagine 59, asparagine 68, asparagine 89, asparagine 99, asparagine 107, asparagine 208, and asparagine 245. The helical transmembrane segment at 268–286 (LLGGMVLAVSVSVFAFLSL) threads the bilayer. A topological domain (cytoplasmic) is located at residue valine 287.

Belongs to the cysteine-rich repeat secretory protein family.

The protein resides in the membrane. The polypeptide is Cysteine-rich repeat secretory protein 58 (CRRSP58) (Arabidopsis thaliana (Mouse-ear cress)).